A 211-amino-acid chain; its full sequence is Thymidylate kinase (211 aa).

10 to 17 (GGDGVGKS) lines the ATP pocket.

Belongs to the thymidylate kinase family.

The catalysed reaction is dTMP + ATP = dTDP + ADP. Phosphorylation of dTMP to form dTDP in both de novo and salvage pathways of dTTP synthesis. This is Thymidylate kinase from Clavibacter michiganensis subsp. michiganensis (strain NCPPB 382).